The primary structure comprises 153 residues: Arginine repressor (153 aa).

Belongs to the ArgR family.

The protein resides in the cytoplasm. The protein operates within amino-acid biosynthesis; L-arginine biosynthesis [regulation]. Regulates arginine biosynthesis genes. The protein is Arginine repressor of Clostridium tetani (strain Massachusetts / E88).